Consider the following 292-residue polypeptide: Tetrahydromethanopterin:alpha-L-glutamate ligase (292 aa).

The ATP-grasp domain maps to 103 to 286 (SFLMEVHKIP…IAQNLIDEAL (184 aa)). Residues K138, 176 to 188 (QEFV…VYRD), and R204 each bind ATP. Mg(2+)-binding residues include D247, E259, and N261. Mn(2+) is bound by residues D247, E259, and N261.

This sequence belongs to the RimK family. MptN subfamily. As to quaternary structure, homodimer. Requires Mg(2+) as cofactor. Mn(2+) serves as cofactor.

The enzyme catalyses 5,6,7,8-tetrahydromethanopterin + L-glutamate + ATP = 5,6,7,8-tetrahydrosarcinapterin + ADP + phosphate + H(+). The protein operates within cofactor biosynthesis; 5,6,7,8-tetrahydrosarcinapterin biosynthesis. Functionally, catalyzes the ATP or GTP-dependent addition of one L-glutamate molecule to tetrahydromethanopterin, producing tetrahydrosarcinapterin. In Methanococcus maripaludis (strain DSM 14266 / JCM 13030 / NBRC 101832 / S2 / LL), this protein is Tetrahydromethanopterin:alpha-L-glutamate ligase (mptN).